A 348-amino-acid chain; its full sequence is Dihydroorotase (348 aa).

The Zn(2+) site is built by His17 and His19. Substrate contacts are provided by residues 19 to 21 (HLR) and Asn45. Positions 103, 140, and 178 each coordinate Zn(2+). Lys103 bears the N6-carboxylysine mark. His140 is a binding site for substrate. A substrate-binding site is contributed by Leu223. Residue Asp251 participates in Zn(2+) binding. Residue Asp251 is part of the active site. The substrate site is built by His255 and Ala267.

Belongs to the metallo-dependent hydrolases superfamily. DHOase family. Class II DHOase subfamily. Homodimer. It depends on Zn(2+) as a cofactor.

The enzyme catalyses (S)-dihydroorotate + H2O = N-carbamoyl-L-aspartate + H(+). The protein operates within pyrimidine metabolism; UMP biosynthesis via de novo pathway; (S)-dihydroorotate from bicarbonate: step 3/3. Its function is as follows. Catalyzes the reversible cyclization of carbamoyl aspartate to dihydroorotate. This chain is Dihydroorotase, found in Shigella flexneri.